The chain runs to 207 residues: Sodium/potassium-transporting ATPase subunit beta-1-interacting protein 1 (207 aa).

3 helical membrane passes run 2 to 22 (GRCD…VAAL), 35 to 55 (APIL…FGTV), and 62 to 82 (LILY…IICF). Residue asparagine 100 is glycosylated (N-linked (GlcNAc...) asparagine). Residues 147–167 (VVSSALQVFLALFGFVYACYV) form a helical membrane-spanning segment.

The protein belongs to the NKAIN family. In terms of assembly, interacts with atp1b1 C-terminus.

It localises to the cell membrane. The sequence is that of Sodium/potassium-transporting ATPase subunit beta-1-interacting protein 1 (nkain1) from Danio rerio (Zebrafish).